Reading from the N-terminus, the 389-residue chain is Phospho-N-acetylmuramoyl-pentapeptide-transferase (389 aa).

The next 10 helical transmembrane spans lie at Arg25–Ile45, Thr73–Leu93, Phe97–Tyr117, Phe135–Ala155, Ile190–Ala210, Gly222–Met242, Gly258–Trp278, Val286–Ile306, Ile311–Val331, and Gln366–Leu386.

Belongs to the glycosyltransferase 4 family. MraY subfamily. Mg(2+) is required as a cofactor.

The protein resides in the cell inner membrane. The enzyme catalyses UDP-N-acetyl-alpha-D-muramoyl-L-alanyl-gamma-D-glutamyl-meso-2,6-diaminopimeloyl-D-alanyl-D-alanine + di-trans,octa-cis-undecaprenyl phosphate = di-trans,octa-cis-undecaprenyl diphospho-N-acetyl-alpha-D-muramoyl-L-alanyl-D-glutamyl-meso-2,6-diaminopimeloyl-D-alanyl-D-alanine + UMP. Its pathway is cell wall biogenesis; peptidoglycan biosynthesis. Catalyzes the initial step of the lipid cycle reactions in the biosynthesis of the cell wall peptidoglycan: transfers peptidoglycan precursor phospho-MurNAc-pentapeptide from UDP-MurNAc-pentapeptide onto the lipid carrier undecaprenyl phosphate, yielding undecaprenyl-pyrophosphoryl-MurNAc-pentapeptide, known as lipid I. This Burkholderia ambifaria (strain ATCC BAA-244 / DSM 16087 / CCUG 44356 / LMG 19182 / AMMD) (Burkholderia cepacia (strain AMMD)) protein is Phospho-N-acetylmuramoyl-pentapeptide-transferase.